Reading from the N-terminus, the 434-residue chain is Probable phosphatidylinositol 3,4,5-trisphosphate 3-phosphatase TEP1 (434 aa).

The Phosphatase tensin-type domain occupies 33 to 255 (KTKNDIGLRL…RYHEFFITHE (223 aa)). C193 serves as the catalytic Phosphocysteine intermediate.

It carries out the reaction a 1,2-diacyl-sn-glycero-3-phospho-(1D-myo-inositol-3,4,5-trisphosphate) + H2O = a 1,2-diacyl-sn-glycero-3-phospho-(1D-myo-inositol-4,5-bisphosphate) + phosphate. Its function is as follows. May act as a phosphoinositide 3-phosphatase by regulating PtdIns(3,4,5)P3 levels. In Saccharomyces cerevisiae (strain ATCC 204508 / S288c) (Baker's yeast), this protein is Probable phosphatidylinositol 3,4,5-trisphosphate 3-phosphatase TEP1 (TEP1).